We begin with the raw amino-acid sequence, 427 residues long: MKLKTNIRHLHGSIRVPGDKSISHRSIIFGSLAEGETKVYDILRGEDVLSTMQVFRDLGVEIEDKDGVITVQGVGMAGLKAPQNALNMGNSGTSIRLISGVLAGADFEVEMFGDDSLSKRPMDRVTLPLKKMGVSISGQTERDLPPLRLKGTKNLRPIHYELPIASAQVKSALMFAALQAKGESVIIEKEYTRNHTEDMLQQFGGHLSVDGKKITVQGPQKLTGQKVVVPGDISSAAFWLVAGLIAPNSRLVLQNVGINETRTGIIDVIRAMGGKLEITEIDPVAKSATLIVESSDLKGTEICGALIPRLIDELPIIALLATQAQGVTVIKDAEELKVKETDRIQVVADALNSMGADITPTADGMIIKGKSALHGARVNTFGDHRIGMMTAIAALLVADGEVELDRAEAINTSYPSFFDDLESLIHG.

Positions 20, 21, and 25 each coordinate 3-phosphoshikimate. K20 provides a ligand contact to phosphoenolpyruvate. Phosphoenolpyruvate-binding residues include G92 and R120. 4 residues coordinate 3-phosphoshikimate: S166, Q168, D312, and K339. A phosphoenolpyruvate-binding site is contributed by Q168. The Proton acceptor role is filled by D312. Phosphoenolpyruvate-binding residues include R343 and R385.

The protein belongs to the EPSP synthase family. As to quaternary structure, monomer.

Its subcellular location is the cytoplasm. It carries out the reaction 3-phosphoshikimate + phosphoenolpyruvate = 5-O-(1-carboxyvinyl)-3-phosphoshikimate + phosphate. It functions in the pathway metabolic intermediate biosynthesis; chorismate biosynthesis; chorismate from D-erythrose 4-phosphate and phosphoenolpyruvate: step 6/7. Catalyzes the transfer of the enolpyruvyl moiety of phosphoenolpyruvate (PEP) to the 5-hydroxyl of shikimate-3-phosphate (S3P) to produce enolpyruvyl shikimate-3-phosphate and inorganic phosphate. The chain is 3-phosphoshikimate 1-carboxyvinyltransferase from Streptococcus pneumoniae serotype 19F (strain G54).